Consider the following 506-residue polypeptide: Galactose/methyl galactoside import ATP-binding protein MglA (506 aa).

ABC transporter domains lie at 14 to 249 (LTMT…VGRE) and 264 to 506 (VILE…AKYL). 46–53 (GENGAGKS) serves as a coordination point for ATP.

The protein belongs to the ABC transporter superfamily. Galactose/methyl galactoside importer (TC 3.A.1.2.3) family. As to quaternary structure, the complex is composed of one ATP-binding protein (MglA), two transmembrane proteins (MglC) and a solute-binding protein (MglB).

It is found in the cell inner membrane. It carries out the reaction D-galactose(out) + ATP + H2O = D-galactose(in) + ADP + phosphate + H(+). The catalysed reaction is methyl beta-D-galactoside(out) + ATP + H2O = methyl beta-D-galactoside(in) + ADP + phosphate + H(+). Functionally, part of the ABC transporter complex MglABC involved in galactose/methyl galactoside import. Responsible for energy coupling to the transport system. This Mannheimia succiniciproducens (strain KCTC 0769BP / MBEL55E) protein is Galactose/methyl galactoside import ATP-binding protein MglA.